The chain runs to 625 residues: Phosphomethylpyrimidine synthase (625 aa).

Substrate contacts are provided by residues Asn230, Met259, Tyr288, His324, 344 to 346 (SRG), 385 to 388 (DGLR), and Glu424. His428 serves as a coordination point for Zn(2+). Tyr451 is a binding site for substrate. Residue His492 participates in Zn(2+) binding. Residues Cys572, Cys575, and Cys580 each contribute to the [4Fe-4S] cluster site.

This sequence belongs to the ThiC family. In terms of assembly, homodimer. Requires [4Fe-4S] cluster as cofactor.

The enzyme catalyses 5-amino-1-(5-phospho-beta-D-ribosyl)imidazole + S-adenosyl-L-methionine = 4-amino-2-methyl-5-(phosphooxymethyl)pyrimidine + CO + 5'-deoxyadenosine + formate + L-methionine + 3 H(+). It functions in the pathway cofactor biosynthesis; thiamine diphosphate biosynthesis. Its function is as follows. Catalyzes the synthesis of the hydroxymethylpyrimidine phosphate (HMP-P) moiety of thiamine from aminoimidazole ribotide (AIR) in a radical S-adenosyl-L-methionine (SAM)-dependent reaction. This Xanthomonas oryzae pv. oryzae (strain MAFF 311018) protein is Phosphomethylpyrimidine synthase.